The sequence spans 177 residues: ATP synthase subunit delta (177 aa).

This sequence belongs to the ATPase delta chain family. F-type ATPases have 2 components, F(1) - the catalytic core - and F(0) - the membrane proton channel. F(1) has five subunits: alpha(3), beta(3), gamma(1), delta(1), epsilon(1). F(0) has three main subunits: a(1), b(2) and c(10-14). The alpha and beta chains form an alternating ring which encloses part of the gamma chain. F(1) is attached to F(0) by a central stalk formed by the gamma and epsilon chains, while a peripheral stalk is formed by the delta and b chains.

Its subcellular location is the cell inner membrane. F(1)F(0) ATP synthase produces ATP from ADP in the presence of a proton or sodium gradient. F-type ATPases consist of two structural domains, F(1) containing the extramembraneous catalytic core and F(0) containing the membrane proton channel, linked together by a central stalk and a peripheral stalk. During catalysis, ATP synthesis in the catalytic domain of F(1) is coupled via a rotary mechanism of the central stalk subunits to proton translocation. Its function is as follows. This protein is part of the stalk that links CF(0) to CF(1). It either transmits conformational changes from CF(0) to CF(1) or is implicated in proton conduction. The polypeptide is ATP synthase subunit delta (Shewanella frigidimarina (strain NCIMB 400)).